A 410-amino-acid polypeptide reads, in one-letter code: Secreted protein PRY1 (410 aa).

The N-terminal stretch at 1–20 (MKQNYILSIILCYLLANVHS) is a signal peptide. Disordered stretches follow at residues 64–86 (PAPV…STPS), 102–132 (SDSD…SSSS), and 148–260 (SSSS…SSSS). A compositionally biased stretch (low complexity) spans 148-179 (SSSSTPSSISQQQQQQQGSPASGSNSPNSAQP). Gly residues predominate over residues 197-211 (SGLGSGFGSGFGSGS). A compositionally biased stretch (low complexity) spans 212–260 (GSDSDSGSGLPSASSSTIIQQQPSSSNIGSSSTSSSSSSSSSSSSSSSS). The 112-residue stretch at 283–394 (LDAHNKYRAQ…NWGLYVVCEY (112 aa)) folds into the SCP domain.

The protein belongs to the CRISP family.

The protein localises to the secreted. Functionally, secreted protein that acts as a virulence factor during infections. This Candida albicans (strain SC5314 / ATCC MYA-2876) (Yeast) protein is Secreted protein PRY1 (PRY1).